The chain runs to 202 residues: Succinate dehydrogenase cytochrome b558 subunit (202 aa).

Helical transmembrane passes span 12–31 (LHSLLGVIPVGIFLIQHLVV), 60–79 (IFIIFLPLIYHAVYGVYIAF), 93–113 (NWLFVLQRVTGIITLIFVSWH), 135–155 (ILSSPAMLGFYIVGVLSTIFH), and 178–196 (ISTYVTLIIFVALSYVGLK). Heme is bound by residues histidine 28, histidine 70, histidine 113, and histidine 155.

The protein belongs to the cytochrome b558 family. As to quaternary structure, part of an enzyme complex containing three subunits: a flavoprotein, an iron-sulfur protein and cytochrome b-558.

It is found in the cell membrane. The protein operates within carbohydrate metabolism; tricarboxylic acid cycle. Functionally, di-heme cytochrome of the succinate dehydrogenase complex. This is Succinate dehydrogenase cytochrome b558 subunit (sdhC) from Bacillus subtilis (strain 168).